The chain runs to 341 residues: Protein DOWNY MILDEW RESISTANCE 6 (341 aa).

The Fe2OG dioxygenase domain occupies 188–288 (QGQHMAVNYY…RLSVASFLCP (101 aa)). 3 residues coordinate Fe cation: H212, D214, and H269. R279 contacts 2-oxoglutarate.

The protein belongs to the iron/ascorbate-dependent oxidoreductase family. Fe(2+) serves as cofactor.

The enzyme catalyses salicylate + NADH + O2 + H(+) = 2,3-dihydroxybenzoate + NAD(+) + H2O. Converts salicylic acid (SA) to 2,3-dihydroxybenzoic acid (2,3-DHBA). Suppressor of immunity. Regulates negatively defense associated genes expression (e.g. PR-1, PR-2, and PR-5). Negative regulator of defense against Hyaloperonospora arabidopsidis. In terms of biological role, (Microbial infection) Required for susceptibility to the downy mildew pathogen Hyaloperonospora arabidopsidis. Its function is as follows. (Microbial infection) Required for susceptibility to Pseudomonas syringae pv. tomato DC3000. Functionally, (Microbial infection) Required for susceptibility to the oomycete Phytophthora capsici. The protein is Protein DOWNY MILDEW RESISTANCE 6 of Arabidopsis thaliana (Mouse-ear cress).